A 706-amino-acid chain; its full sequence is Drebrin (706 aa).

At alanine 2 the chain carries N-acetylalanine. The ADF-H domain maps to 3 to 134 (GVSFSGHRLE…DAGAIGQRLS (132 aa)). 2 positions are modified to phosphoserine: serine 141 and serine 142. Residues 209 to 236 (ERMEQERQEQEERERRYREREQQIEEHR) show a composition bias toward basic and acidic residues. The disordered stretch occupies residues 209 to 497 (ERMEQERQEQ…AEPAASVTSV (289 aa)). Residue serine 241 is modified to Phosphoserine. Positions 288–298 (DNPREFFRQQE) are enriched in basic and acidic residues. A compositionally biased stretch (low complexity) spans 331-345 (SDSGPSSSSSSSSSP). A Phosphoserine modification is found at serine 344. The segment covering 357–366 (RTPNLSSSLP) has biased composition (polar residues). Phosphothreonine is present on residues threonine 379 and threonine 383. Polar residues predominate over residues 382–396 (PTRSPSDSSTASTPI). Residues serine 385, serine 387, and serine 393 each carry the phosphoserine modification. Threonine 394 bears the Phosphothreonine mark. The segment covering 411-422 (QPPPPPPPPPPT) has biased composition (pro residues). Over residues 453 to 497 (AAEPPQAQEPPLLQSSPLEDSMCTESPEQAALAAPAEPAASVTSV) the composition is skewed to low complexity. A Phosphoserine modification is found at serine 468. Threonine 550 is modified (phosphothreonine). Residues 633 to 677 (EPHLLTNGETTQKEGTQASEGYFSQSQEEEFAQSEEPCAKVPPPV) are disordered. Residues 639–651 (NGETTQKEGTQAS) show a composition bias toward polar residues. Serine 658 bears the Phosphoserine mark.

Interacts with RUFY3. Interacts with CXCR4; this interaction is enhanced by antigenic stimulation. Interacts (via ADF-H domain) with ZMYND8 (via N-terminus); the interaction leads to sequestering of ZMYND8 in the cytoplasm. Expressed in the hippocampus, with expression in the pyramidal cells of CA1, CA2 and CA3 and in the granule cells of the dentate gyrus (at protein level). Highly expressed in brain, also present in stomach and to a lesser degree in kidney, colon, and urinary bladder. The E2 isoform is specifically expressed in adult stomach, kidney, and cultured cells.

The protein resides in the cytoplasm. Its subcellular location is the cell projection. It localises to the dendrite. It is found in the cell cortex. The protein localises to the cell junction. The protein resides in the growth cone. Functionally, actin cytoskeleton-organizing protein that plays a role in the formation of cell projections. Required for actin polymerization at immunological synapses (IS) and for the recruitment of the chemokine receptor CXCR4 to IS. Plays a role in dendritic spine morphogenesis and organization, including the localization of the dopamine receptor DRD1 to the dendritic spines. Involved in memory-related synaptic plasticity in the hippocampus. This chain is Drebrin (Dbn1), found in Mus musculus (Mouse).